A 153-amino-acid chain; its full sequence is Large ribosomal subunit protein uL13 (153 aa).

The tract at residues 128 to 153 (SEHPHEAQSPEVLDVTSMNSKNTRSA) is disordered. The span at 143-153 (TSMNSKNTRSA) shows a compositional bias: polar residues.

Belongs to the universal ribosomal protein uL13 family. In terms of assembly, part of the 50S ribosomal subunit.

This protein is one of the early assembly proteins of the 50S ribosomal subunit, although it is not seen to bind rRNA by itself. It is important during the early stages of 50S assembly. The polypeptide is Large ribosomal subunit protein uL13 (Roseobacter denitrificans (strain ATCC 33942 / OCh 114) (Erythrobacter sp. (strain OCh 114))).